Reading from the N-terminus, the 119-residue chain is MICPPGENKSMAERKQGGQGNGVGSSVVTEVKPKTQKPSLYRVLILNDDYTPMEFVVYVLERFFNKSREDATRIMLHVHQNGVGVCGVYTYEVAETKVAQVIDSARRHQHPLQCTMEKD.

A disordered region spans residues M1 to T29.

This sequence belongs to the ClpS family. In terms of assembly, binds to the N-terminal domain of the chaperone ClpA.

Its function is as follows. Involved in the modulation of the specificity of the ClpAP-mediated ATP-dependent protein degradation. The protein is ATP-dependent Clp protease adapter protein ClpS of Caulobacter vibrioides (strain ATCC 19089 / CIP 103742 / CB 15) (Caulobacter crescentus).